Here is a 284-residue protein sequence, read N- to C-terminus: Shikimate dehydrogenase (NADP(+)) (284 aa).

Shikimate-binding positions include 23 to 25 and T70; that span reads SLS. The Proton acceptor role is filled by K74. E86 lines the NADP(+) pocket. The shikimate site is built by N95 and D111. Residues 135–139, 159–164, and A227 contribute to the NADP(+) site; these read GAGGA and NRTPGR. Shikimate is bound at residue Y229. G251 contributes to the NADP(+) binding site.

This sequence belongs to the shikimate dehydrogenase family. In terms of assembly, homodimer.

The catalysed reaction is shikimate + NADP(+) = 3-dehydroshikimate + NADPH + H(+). The protein operates within metabolic intermediate biosynthesis; chorismate biosynthesis; chorismate from D-erythrose 4-phosphate and phosphoenolpyruvate: step 4/7. Functionally, involved in the biosynthesis of the chorismate, which leads to the biosynthesis of aromatic amino acids. Catalyzes the reversible NADPH linked reduction of 3-dehydroshikimate (DHSA) to yield shikimate (SA). The sequence is that of Shikimate dehydrogenase (NADP(+)) from Rubrobacter xylanophilus (strain DSM 9941 / JCM 11954 / NBRC 16129 / PRD-1).